Reading from the N-terminus, the 716-residue chain is Polyribonucleotide nucleotidyltransferase (716 aa).

The Mg(2+) site is built by Asp-488 and Asp-494. Residues 555-614 form the KH domain; the sequence is PKIETITIPTDKIREVIGTGGKVIREIVATTGAKVDINDEGTVKVSASDGAKIKAAIDWI. An S1 motif domain is found at 624–692; it reads GAIYDGKVVK…DRGKTKLSMK (69 aa). The disordered stretch occupies residues 695-716; that stretch reads DQETGEDLSKKEAVSPEEAVNT.

Belongs to the polyribonucleotide nucleotidyltransferase family. Requires Mg(2+) as cofactor.

The protein resides in the cytoplasm. It carries out the reaction RNA(n+1) + phosphate = RNA(n) + a ribonucleoside 5'-diphosphate. Functionally, involved in mRNA degradation. Catalyzes the phosphorolysis of single-stranded polyribonucleotides processively in the 3'- to 5'-direction. This Caulobacter sp. (strain K31) protein is Polyribonucleotide nucleotidyltransferase.